We begin with the raw amino-acid sequence, 2645 residues long: MPHRLPSHGASLGLIFGPQAMNFDSNTFTTLRAKLVKDRHSQWAIDAIAALPAEWSAVSGNVAIFKQYDAGKALQNLNEWLKTGHVPPADIPFCNVLLAPMVVIDHVISYLEFLQSAFPDLDDDEELPASAKESLETLGLSLGTLSAFAVSSSSTLSEVKKHGATAIRLAMLVGAVGDAEDLAREPEEGALSFSAFWKSTELHDLLHTSLDAIPEAYISVAVDEKRSTITTSRSKASSHMQDLRSSGLYIAEVSIRGRFHWDGHESTLQELIQYCDRNLQFQFPDTSRIVLPSHSVTGGEYITQEDGSLHAIALRAILVDLSQWLETITGAYGSESSKGIKSVVCFGPERCVPSALVRRLGSKLTHVLDVDLPTSALPKQLLQSADVSSTNGVKIPASIKGQSPARQHPIDIDANDDKIAVIGMACNVPGGEDMDEFWKILVAGKSQHEELPRGTGRFEFETPWREPYTKTKWYGNFIKDYDVFDHKFFKKGPREMLNTEPQHRLLLHAAYQTLEQSGYFSKPDYDKHIACFLGPGHVDYASSVNCYAPNAYTATGNLKSMCAGKISHHFGWTGPILTLDTACSSSCVAIHYACRSILSGEVSAALAGGSNVLSSVEWYENLSGAQFLSPTGQCKPFDAKADGYCRGDGIGLVFLKKLSTALADGDQVYGVIAGSKVYQNVGSTTITVPNADSLATLFKDITKQARIDPAKVSVVEAHGTGTPVGDPAEYEAICRIFGGSQRTDVLSLSSVKGLFGHTEGASGVCSLLKVLLMMHENAIPPQASFGSMNPGLKATTQDNIEVPTRLTPWKPNTQIALINNYGASGSNSSLVVTEPPAFETFDHEALQYRAFPFWIPGLDDKSIQRYATRLRAWFQRHHSSSKDLSMRNMSFQLAFQSNRTLPQALVFKAASVSDLESKLKAFENGTLNSISSAATSQRPVILCFGGQISTYIGLDREVYENVAVLRQFLDQCDETSVSLGFPSVFPHIFQKEPIYDLIKLQLALFAMQYSCAQAWIACGVEVAAVVGHSFGELTASCVSGTVSLQDAITMIAGRARLIQKKWGTDSGAMIAVDTELSGVNDLLAKTREGSGADDNPSIACYNGHRSFTLAGTTKSIEQAESILKQDATFSSTRWKRLNVTNAFHSVLVDSLHHDLQSLGKRIVFNEPKLHFERSTKERMSGKPNSDYIAHHMRNPVYFDHAVQRLAKDFPAAIWLEAGSNSTITSMANRALSSSAASSTSSFHAVSITTDKSFDLLVDSTLKLWKEQLNVSFWAHHRSQTHQYTPMILPPYQFEKSRHWLETKPPPKPEPIPVEKSTTQAVETSKGFTSFAGYIDGNQRSLRYRINSNHETFQRHVNGHICAKLAAVWPSSIQIDMVLDALMNLRAEFKDLSYQPQISNIVHHRPLLLDNSKDYWLELVAKDDKGLTWDWNFSSSSGLGSKSTICTSGVCSFCSATDPNRLAEFQTLERLSSRRRCVELLEARDVENIMQGTANIYRAFSEVIEYTDDYRYVKKLVGHNNESAARVVKKHYGKTWLDYLLFDGLGQTAGMYVNLMADKANVSEKGIFMCETINRWLRSPTIRSHESLPTDWEVYAVHHPISDKKYVSDIFSFDARDGSLVEVVLGASYNKVPLPVMRGILGSQSSTTRLDAITANAEIPSQAGIGSQQPHLNFKPLSALPALSNGTTGTENPQIKSKTNKVKKVPTRKSGGSDLETPAKTRNILENLTGVEASSINDDSNLIDLGLDSLLSMELIRDVEDIFKVDLDAEQMLDLTDFASLVKYIREIRGVLEEQNVDDSESESEELQQQATPIDSATRQNHEKLTMNGTGLLTNGESVPEVPLDSTLVLDAFRYIKEASDDFIVKNKFETYCAEFMPRSEEVSIAIFCNAFEELGCPIRTATAGTRLERVQHLPKHKKVVDYIYKALEKNAGLIEISGEEIIRTSVPCPSEQTEAMLESLLHDRPAQDAEIQLMRITGAAFGKCLAGKADVLPLLFGSIEGRALLTKLYATSTLSNTILQQLEVFVEKIGSSWPKDGGPLRILEVGAGTGGTTTKIVPVLARLGIPVEYTMTDVSSFFTATGRTKFKEYPFMKFKTVDIEKEPDAKLLKTQHIVLGSNVIHATRVLSVSLSNIHKMLRPDGLIIYHELTSQLLWADIIFGLVEGWWLFEDGRDHALQSPQHWEKILRSVGYGHVDWTDGTRPEAKIQNLIFAMASDPTYDREPLPTASIMTDVADQVATVNAYVCQYSSNFQFRRNSASRATGLSSGRCVLITGATGSLGAHLVAYCAERLDVSKVICFNRTSQTAGVARQAKAFKSKGISLEVNTNPKLEVIETDASKDQLGLSPSEYAALVDSVTDIVHNAWPMSINRGVRSYEGQFRVMRNLVDLARDATMQRPEPFKFGFQFISSIGVVGMYPLLTNNFLVPEHRMPVESVVPSGYGYAKLVCERMLDETLHLYPQAFHPSAVRINQIAGSTRSGYWNRNEHLVFLIKSSQTLNALPDLQGHLTWCPVDTVAATLGELLLDNANSVASAHPIYHIENPSRQSYSEMIRVLADSLFIDHANIIPFYDWVQRVRDFEGPVTENPAKQVVDFFDEHFLRMSCGDLVLDTVKSREISATLRARGVITSDLVNKYVEAWRRAGVLR.

The segment at 73–2366 (ALQNLNEWLK…TDIVHNAWPM (2294 aa)) is N-terminal acylcarrier protein transacylase domain (SAT). The active-site Proton donor/acceptor; for transacylase activity is the His-260. One can recognise a Ketosynthase family 3 (KS3) domain in the interval 416–834 (DDKIAVIGMA…GSNSSLVVTE (419 aa)). Catalysis depends on for beta-ketoacyl synthase activity residues Cys-583, His-718, and His-757. Positions 943–1252 (CFGGQISTYI…HAVSITTDKS (310 aa)) are malonyl-CoA:ACP transacylase (MAT) domain. Residues 1324 to 1457 (SKGFTSFAGY…GVCSFCSATD (134 aa)) are N-terminal hotdog fold. Residues 1324 to 1637 (SKGFTSFAGY…YNKVPLPVMR (314 aa)) form the PKS/mFAS DH domain. Residues 1330–1641 (FAGYIDGNQR…PLPVMRGILG (312 aa)) are product template (PT) domain. His-1359 (proton acceptor; for dehydratase activity) is an active-site residue. The C-terminal hotdog fold stretch occupies residues 1487 to 1637 (NIMQGTANIY…YNKVPLPVMR (151 aa)). The Proton donor; for dehydratase activity role is filled by Asp-1542. A compositionally biased stretch (polar residues) spans 1684–1696 (NGTTGTENPQIKS). The disordered stretch occupies residues 1684–1716 (NGTTGTENPQIKSKTNKVKKVPTRKSGGSDLET). The segment covering 1697–1706 (KTNKVKKVPT) has biased composition (basic residues). The 78-residue stretch at 1711–1788 (GSDLETPAKT…SLVKYIREIR (78 aa)) folds into the Carrier domain. An O-(pantetheine 4'-phosphoryl)serine modification is found at Ser-1748. Residues 1794-1805 (QNVDDSESESEE) are compositionally biased toward acidic residues. The disordered stretch occupies residues 1794–1816 (QNVDDSESESEELQQQATPIDSA). Tyr-2009 serves as the catalytic For methyltransferase activity. The methyltransferase (CMeT) domain stretch occupies residues 2023 to 2197 (EVFVEKIGSS…SVGYGHVDWT (175 aa)). Residues 2269–2573 (CVLITGATGS…NIIPFYDWVQ (305 aa)) form an NADPH-binding (R) domain region.

It participates in mycotoxin biosynthesis. Functionally, non-reducing polyketide synthase; part of the gene cluster that mediates the biosynthesis of the selective antifungal agent ascochitine, an o-quinone methide that plays a possible protective role against other microbial competitors in nature and is considered to be important for pathogenicity of legume-associated Didymella species. The pathway probably begins with the synthesis of a keto-aldehyde intermediate by the ascochitine non-reducing polyketide synthase pksAC from successive condensations of 4 malonyl-CoA units, presumably with a simple acetyl-CoA starter unit. Release of the keto-aldehyde intermediate is consistent with the presence of the C-terminal reductive release domain. The HR-PKS (orf7) probably makes a diketide starter unit which is passed to the non-reducing polyketide synthase pksAC for further extension, producing ascochital and ascochitine. The aldehyde dehydrogenase (orf1), the 2-oxoglutarate-dependent dioxygenase (orf3) and the dehydrogenase (orf9) are probably involved in subsequent oxidations of methyl groups to the carboxylic acid of the heterocyclic ring. The ascochitine gene cluster also includes a gene encoding a short peptide (orf2) that is often found in secondary metabolite gene clusters and which function has still to be determined. In Didymella fabae (Leaf and pod spot disease fungus), this protein is Non-reducing polyketide synthase AC.